The primary structure comprises 1009 residues: Type VII secretion system accessory factor EsaA (1009 aa).

The chain crosses the membrane as a helical span at residues 7 to 27; the sequence is IYALIVTLIIIIAIVSMIFFV. The span at 680 to 697 shows a compositional bias: basic and acidic residues; it reads TFAEEPQEPKIDKGKNDE. The interval 680–707 is disordered; that stretch reads TFAEEPQEPKIDKGKNDEFNTMSSNLDK. 5 helical membrane-spanning segments follow: residues 822 to 842, 869 to 889, 903 to 923, 928 to 948, and 979 to 999; these read ISPT…AYIF, VITS…VGLI, KFIL…TYLL, SIGM…MNNL, and IGLV…LNMF.

The protein belongs to the EsaA family. As to quaternary structure, homodimer. Interacts with EssB.

It localises to the cell membrane. Functionally, component of the type VII secretion system (Ess). Provides together with EssB and other components such as EssC and EssE a secretion plateform accross the cytoplasmic membrane in the host. This Staphylococcus aureus (strain USA300) protein is Type VII secretion system accessory factor EsaA.